A 476-amino-acid chain; its full sequence is uncharacterized protein (476 aa).

The protein belongs to the herpesviridae US22 family.

This is an uncharacterized protein from Homo sapiens (Human).